The chain runs to 273 residues: MSDMHSLLIAAILGVVEGLTEFLPVSSTGHMIIVGHLLGFEGDTAKTFEVVIQLGSILAVVVMFWRRLFGLIGIHFGRPLQHEGESKGRLTLIHILLGMIPAVVLGLLFHDTIKSLFNPINVMYALVVGGLLLIAAECLKPKEPRAPGLDDMTYRQAFMIGCFQCLALWPGFSRSGATISGGMLMGVSRYAASEFSFLLAVPMMMGATALDLYKSWGFLTNGDIPMFAVGFITAFVVALIAIKTFLQLIKRISFIPFAIYRFIVAAAVYVVFF.

Transmembrane regions (helical) follow at residues 6-26 (SLLI…LPVS), 45-65 (AKTF…VMFW), 90-110 (LTLI…LLFH), 116-136 (LFNP…LIAA), 190-210 (YAAS…ATAL), 222-242 (GDIP…LIAI), and 252-272 (ISFI…YVVF).

Belongs to the UppP family.

The protein resides in the cell inner membrane. The catalysed reaction is di-trans,octa-cis-undecaprenyl diphosphate + H2O = di-trans,octa-cis-undecaprenyl phosphate + phosphate + H(+). In terms of biological role, catalyzes the dephosphorylation of undecaprenyl diphosphate (UPP). Confers resistance to bacitracin. The sequence is that of Undecaprenyl-diphosphatase from Escherichia coli O7:K1 (strain IAI39 / ExPEC).